Consider the following 217-residue polypeptide: Protein-L-isoaspartate O-methyltransferase (217 aa).

The active site involves Ser67.

The protein belongs to the methyltransferase superfamily. L-isoaspartyl/D-aspartyl protein methyltransferase family.

The protein resides in the cytoplasm. It carries out the reaction [protein]-L-isoaspartate + S-adenosyl-L-methionine = [protein]-L-isoaspartate alpha-methyl ester + S-adenosyl-L-homocysteine. Functionally, catalyzes the methyl esterification of L-isoaspartyl residues in peptides and proteins that result from spontaneous decomposition of normal L-aspartyl and L-asparaginyl residues. It plays a role in the repair and/or degradation of damaged proteins. The sequence is that of Protein-L-isoaspartate O-methyltransferase from Azoarcus sp. (strain BH72).